The chain runs to 126 residues: MNNLGRHILAEIYGCDELILNDKEYIERIMVDSALKSGAEVREVAFHKFSPQGVSGVVIISESHLTIHTWPELGYAAVDVFTCGDRVNPWDACNYMGEKLNAKNITATEVKRGIFEQPVAVKASNE.

The Schiff-base intermediate with substrate; via pyruvic acid role is filled by Ser63. Residue Ser63 is modified to Pyruvic acid (Ser); by autocatalysis. His68 serves as the catalytic Proton acceptor; for processing activity. The Proton donor; for catalytic activity role is filled by Cys83.

Belongs to the prokaryotic AdoMetDC family. Type 1 subfamily. In terms of assembly, heterotetramer of two alpha and two beta chains arranged as a dimer of alpha/beta heterodimers. Pyruvate is required as a cofactor. Post-translationally, is synthesized initially as an inactive proenzyme. Formation of the active enzyme involves a self-maturation process in which the active site pyruvoyl group is generated from an internal serine residue via an autocatalytic post-translational modification. Two non-identical subunits are generated from the proenzyme in this reaction, and the pyruvate is formed at the N-terminus of the alpha chain, which is derived from the carboxyl end of the proenzyme. The post-translation cleavage follows an unusual pathway, termed non-hydrolytic serinolysis, in which the side chain hydroxyl group of the serine supplies its oxygen atom to form the C-terminus of the beta chain, while the remainder of the serine residue undergoes an oxidative deamination to produce ammonia and the pyruvoyl group blocking the N-terminus of the alpha chain.

The enzyme catalyses S-adenosyl-L-methionine + H(+) = S-adenosyl 3-(methylsulfanyl)propylamine + CO2. It participates in amine and polyamine biosynthesis; S-adenosylmethioninamine biosynthesis; S-adenosylmethioninamine from S-adenosyl-L-methionine: step 1/1. Functionally, catalyzes the decarboxylation of S-adenosylmethionine to S-adenosylmethioninamine (dcAdoMet), the propylamine donor required for the synthesis of the polyamines spermine and spermidine from the diamine putrescine. The sequence is that of S-adenosylmethionine decarboxylase proenzyme from Clostridium tetani (strain Massachusetts / E88).